Reading from the N-terminus, the 69-residue chain is Putative membrane protein insertion efficiency factor (69 aa).

Belongs to the UPF0161 family.

The protein localises to the cell membrane. Its function is as follows. Could be involved in insertion of integral membrane proteins into the membrane. The protein is Putative membrane protein insertion efficiency factor of Clostridium kluyveri (strain NBRC 12016).